A 310-amino-acid polypeptide reads, in one-letter code: Ribosomal RNA small subunit methyltransferase H (310 aa).

Residues 33–35 (AGH), D53, F79, D100, and Q107 each bind S-adenosyl-L-methionine.

This sequence belongs to the methyltransferase superfamily. RsmH family.

The protein localises to the cytoplasm. The catalysed reaction is cytidine(1402) in 16S rRNA + S-adenosyl-L-methionine = N(4)-methylcytidine(1402) in 16S rRNA + S-adenosyl-L-homocysteine + H(+). In terms of biological role, specifically methylates the N4 position of cytidine in position 1402 (C1402) of 16S rRNA. The protein is Ribosomal RNA small subunit methyltransferase H of Clostridium beijerinckii (strain ATCC 51743 / NCIMB 8052) (Clostridium acetobutylicum).